Reading from the N-terminus, the 303-residue chain is Indole-3-glycerol phosphate synthase (303 aa).

The protein belongs to the TrpC family.

It carries out the reaction 1-(2-carboxyphenylamino)-1-deoxy-D-ribulose 5-phosphate + H(+) = (1S,2R)-1-C-(indol-3-yl)glycerol 3-phosphate + CO2 + H2O. It functions in the pathway amino-acid biosynthesis; L-tryptophan biosynthesis; L-tryptophan from chorismate: step 4/5. This is Indole-3-glycerol phosphate synthase from Acaryochloris marina (strain MBIC 11017).